A 102-amino-acid polypeptide reads, in one-letter code: Small ribosomal subunit protein uS10 (102 aa).

This sequence belongs to the universal ribosomal protein uS10 family. As to quaternary structure, part of the 30S ribosomal subunit.

Involved in the binding of tRNA to the ribosomes. The chain is Small ribosomal subunit protein uS10 from Nocardioides sp. (strain ATCC BAA-499 / JS614).